The following is a 475-amino-acid chain: Flotillin-like protein 4 (475 aa).

Coiled coils occupy residues 235–255 and 305–325; these read ENQREAEVAEANSELAKKKAA and QYETKVQEANWELYKKQKEAE.

This sequence belongs to the band 7/mec-2 family. Flotillin subfamily. In terms of tissue distribution, expressed in roots and nodules. Primarily expressed in vascular tissues. Upon induction of nodulation, expansion of expression in the root cortex in the region of elongating root hairs, which will eventually become colonized by bacteria. Expressed in the infection zone in nodules.

It localises to the membrane. Its subcellular location is the caveola. The protein resides in the cell membrane. Functionally, may act as a scaffolding protein within caveolar membranes, functionally participating in formation of caveolae or caveolae-like vesicles. Required for normal infection threads initiation and elongation and nodulation. Probably involved in polar growth of the infection thread. In Medicago truncatula (Barrel medic), this protein is Flotillin-like protein 4 (FLOT4).